Here is a 448-residue protein sequence, read N- to C-terminus: Solute carrier family 52, riboflavin transporter, member 1 (448 aa).

Transmembrane regions (helical) follow at residues 14–34 (LLVA…WVEL), 47–67 (LPSY…VVTL), 79–99 (VPIQ…APLW), 124–144 (ACCT…PPFL), and 147–167 (FFLG…VQGV). A glycan (N-linked (GlcNAc...) asparagine) is linked at Asn-178. The helical transmembrane segment at 191 to 211 (FPASTFFWALTALLVTSAAAF) threads the bilayer. Residues 225 to 267 (TTGGSGPELQLGSPGAEEEEKEEEEALPLQEPPSQAAGTIPGP) are disordered. Acidic residues predominate over residues 240–250 (AEEEEKEEEEA). A run of 5 helical transmembrane segments spans residues 280 to 300 (AFLL…LPSV), 315 to 335 (LAVV…MGVL), 342 to 362 (LVGL…LAIL), 369 to 389 (VGTT…LCVF), and 407 to 427 (ALLA…GAMF).

This sequence belongs to the riboflavin transporter family. Widely expressed. Highly expressed in the testis, placenta and small intestine. Expressed at lower level in other tissues.

The protein localises to the cell membrane. It catalyses the reaction riboflavin(in) = riboflavin(out). With respect to regulation, the activity is strongly inhibited by riboflavin analogs, such as lumiflavin. Weakly inhibited by flavin adenine dinucleotide (FAD). In terms of biological role, plasma membrane transporter mediating the uptake by cells of the water soluble vitamin B2/riboflavin that plays a key role in biochemical oxidation-reduction reactions of the carbohydrate, lipid, and amino acid metabolism. Humans are unable to synthesize vitamin B2/riboflavin and must obtain it via intestinal absorption. Its function is as follows. (Microbial infection) May function as a cell receptor to retroviral envelopes similar to the porcine endogenous retrovirus (PERV-A). This Homo sapiens (Human) protein is Solute carrier family 52, riboflavin transporter, member 1.